The following is a 1043-amino-acid chain: Integrator complex subunit 3 (1043 aa).

The residue at position 1 (Met1) is an N-acetylmethionine. Residues Ser502, Ser537, and Ser995 each carry the phosphoserine modification. Positions 977 to 1043 (YEDSSTKPPK…GSSAVGSDSD (67 aa)) are disordered. Over residues 1008–1022 (AEEESGSSSASEEED) the composition is skewed to acidic residues.

It belongs to the Integrator subunit 3 family. Component of the Integrator complex, composed of core subunits INTS1, INTS2, INTS3, INTS4, INTS5, INTS6, INTS7, INTS8, INTS9/RC74, INTS10, INTS11/CPSF3L, INTS12, INTS13, INTS14 and INTS15. The core complex associates with protein phosphatase 2A subunits PPP2CA and PPP2R1A, to form the Integrator-PP2A (INTAC) complex. Component of the SOSS complex, composed of SOSS-B (SOSS-B1/NABP2 or SOSS-B2/NABP1), SOSS-A/INTS3 and SOSS-C/INIP. SOSS complexes containing SOSS-B1/NABP2 are more abundant than complexes containing SOSS-B2/NABP1. Interacts with SOSS-B1/NABP2, SOSS-B2/NABP1 and SOSS-C/INIP; the interaction is direct. Interacts with NBN/NBS1.

It localises to the nucleus. The protein localises to the cytoplasm. Component of the integrator complex, a multiprotein complex that terminates RNA polymerase II (Pol II) transcription in the promoter-proximal region of genes. The integrator complex provides a quality checkpoint during transcription elongation by driving premature transcription termination of transcripts that are unfavorably configured for transcriptional elongation: the complex terminates transcription by (1) catalyzing dephosphorylation of the C-terminal domain (CTD) of Pol II subunit POLR2A/RPB1 and SUPT5H/SPT5, (2) degrading the exiting nascent RNA transcript via endonuclease activity and (3) promoting the release of Pol II from bound DNA. The integrator complex is also involved in terminating the synthesis of non-coding Pol II transcripts, such as enhancer RNAs (eRNAs), small nuclear RNAs (snRNAs), telomerase RNAs and long non-coding RNAs (lncRNAs). Within the integrator complex, INTS3 is involved in the post-termination step: INTS3 binds INTS7 in the open conformation of integrator complex and prevents the rebinding of Pol II to the integrator after termination cycle. Mediates recruitment of cytoplasmic dynein to the nuclear envelope, probably as component of the integrator complex. In terms of biological role, component of the SOSS complex, a multiprotein complex that functions downstream of the MRN complex to promote DNA repair and G2/M checkpoint. The SOSS complex associates with single-stranded DNA at DNA lesions and influences diverse endpoints in the cellular DNA damage response including cell-cycle checkpoint activation, recombinational repair and maintenance of genomic stability. The SOSS complex is required for efficient homologous recombination-dependent repair of double-strand breaks (DSBs) and ATM-dependent signaling pathways. In the SOSS complex, it is required for the assembly of the complex and for stabilization of the complex at DNA damage sites. The chain is Integrator complex subunit 3 from Homo sapiens (Human).